Reading from the N-terminus, the 228-residue chain is Sensory transduction protein RegX3 (228 aa).

The Response regulatory domain occupies 3-116 (SVLIVEDEES…ELIARIRAVL (114 aa)). Asp52 is modified (4-aspartylphosphate). A DNA-binding region (ompR/PhoB-type) is located at residues 129 to 228 (DGVLEAGPVR…VRGLGYKLEG (100 aa)).

Phosphorylated by SenX3.

Functionally, member of the two-component regulatory system SenX3/RegX3 involved in stress response. The system is involved in phosphate starvation response. Once phosphorylated by SenX3, activates the expression of the alkaline phosphatase phoA, the high-affinity phosphate transporter pstSCAB, phnDCE, phnF and senX3. May act as a negative regulator of NhaA. Acts by binding to a DNA motif consisting of an inverted repeat. This Mycolicibacterium smegmatis (strain ATCC 700084 / mc(2)155) (Mycobacterium smegmatis) protein is Sensory transduction protein RegX3.